The chain runs to 125 residues: MIVGTGVDLAEVDRIQRSIERYGDKFIKRIYTPGEIAYVERKANKFERYAARFAAKEAGMKAIGTGWRHGVRWQDFEVANLRTGKPTLLLHGVAARYAEKLGVKNIALSITHTAALGMAHVILEN.

The Mg(2+) site is built by Asp-8 and Glu-57.

Belongs to the P-Pant transferase superfamily. AcpS family. Requires Mg(2+) as cofactor.

The protein resides in the cytoplasm. The catalysed reaction is apo-[ACP] + CoA = holo-[ACP] + adenosine 3',5'-bisphosphate + H(+). Functionally, transfers the 4'-phosphopantetheine moiety from coenzyme A to a Ser of acyl-carrier-protein. This Solibacter usitatus (strain Ellin6076) protein is Holo-[acyl-carrier-protein] synthase.